A 746-amino-acid chain; its full sequence is MHPILFPPTLDNIRKITASLVAAAKASGHRRALVLSGDREWCLQAAQVSLASTSLEPVLWIAAQAPENAWRMEAAKAHRSLGQEVDAIVFDAYSGFDLDAFGIITGAIRGGGLLLLLTPPLAAWPSFNDPEHARIVTAPYEVTEVTGRFLKRLVRILREAEGVIIIEQGKILPSVPFAAPARAETGGNPPSPGDSACRTEDQGRAVEAIVKVVTGQRRRPVVLTSDRGRGKSAALGIAAARLLQRGLKHIIVTGPRLDAVEPVFRHAQRLLPQATVSRAALHLPEAGMEFAPPDDLIRTSRPADLLLVDEAATIPTPLLERLLQGYSRIAFATTIHGYEGTGRGFALRFHRVLDEKTRGWKGLRLETPIRWRSGDPLEHFVFRALLLDATAAPDSAVASARPETVAVERLDRDALVRDEATLSELFGLLVLAHYQTRPYDLRHLLDGPNLSVYVMRYRGHVVATALLAAEGGFVEETARGIWEGRTRPHGHLLPESLAAHLGLAQAPRLHCARIMRIAVHPAVQGQGLGTHLVDTIIRETGGEGLDYLGSSFGATVELLRFWERLDFLPVRLSVKRGATSGAHSAIVLHPLSSSGQALVKRARERFLVHLPHQLADPLRELEPQLAAWLLRRGDPAGPLPLDSQDWSDVLAFAFGRRVYEVCIGPIWKLTWGALAAPESATLLGEVERNALIVKVLQKRSWQEAAAALELSGRAQVIEVLRRTLRPLVLHFGNEAVRREAERLAGG.

The interval 181–200 (ARAETGGNPPSPGDSACRTE) is disordered. ATP-binding positions include glutamine 202, 228–237 (GRGKSAALGI), and arginine 370. An N-acetyltransferase domain is found at 405-617 (VAVERLDRDA…VHLPHQLADP (213 aa)). Acetyl-CoA contacts are provided by residues 517 to 519 (IAV), 524 to 530 (QGQGLGT), glutamate 557, and arginine 564.

This sequence belongs to the RNA cytidine acetyltransferase family. TmcA subfamily.

The protein resides in the cytoplasm. The enzyme catalyses cytidine(34) in elongator tRNA(Met) + acetyl-CoA + ATP + H2O = N(4)-acetylcytidine(34) in elongator tRNA(Met) + ADP + phosphate + CoA + H(+). Its function is as follows. Catalyzes the formation of N(4)-acetylcytidine (ac(4)C) at the wobble position of tRNA(Met), by using acetyl-CoA as an acetyl donor and ATP (or GTP). This Nitrosococcus halophilus (strain Nc4) protein is tRNA(Met) cytidine acetyltransferase TmcA.